The chain runs to 307 residues: Follistatin-related protein 1 (307 aa).

Positions methionine 1 to alanine 19 are cleaved as a signal peptide. The Follistatin-like domain maps to isoleucine 29–leucine 52. 5 disulfides stabilise this stretch: cysteine 30-cysteine 41, cysteine 35-cysteine 51, cysteine 53-cysteine 83, cysteine 57-cysteine 76, and cysteine 65-cysteine 97. The Kazal-like domain maps to glycine 47–glutamate 99. Residue asparagine 143 is glycosylated (N-linked (GlcNAc...) asparagine). The 35-residue stretch at asparagine 143 to alanine 177 folds into the EF-hand 1 domain. Position 164 is a phosphoserine (serine 164). N-linked (GlcNAc...) asparagine glycans are attached at residues asparagine 174 and asparagine 179. Positions leucine 192–proline 227 constitute an EF-hand 2 domain. The 55-residue stretch at cysteine 232–valine 286 folds into the VWFC domain.

In terms of assembly, homodimer. Interacts with SCN10A. Interacts with DIP2A; DIP2A may act as a cell surface receptor for FSTL1. Interacts with BMP4. Interacts with CD14; this interaction promotes TL4-mediated signaling cascade.

It localises to the secreted. Its function is as follows. Secreted glycoprotein that is involved in various physiological processes, such as angiogenesis, regulation of the immune response, cell proliferation and differentiation. Plays a role in the development of the central nervous system, skeletal system, lungs, and ureter. Promotes endothelial cell survival, migration and differentiation into network structures in an AKT-dependent manner. Also promotes survival of cardiac myocytes. Initiates various signaling cascades by activating different receptors on the cell surface such as DIP2A, TLR4 or BMP receptors. This chain is Follistatin-related protein 1 (FSTL1), found in Bos taurus (Bovine).